The following is a 102-amino-acid chain: Transposable element activator uncharacterized 12 kDa protein (102 aa).

Residues 24–51 show a composition bias toward basic residues; sequence HNHNQNHNHSHNLNPKKKHHRRGQRSAH. The tract at residues 24–55 is disordered; sequence HNHNQNHNHSHNLNPKKKHHRRGQRSAHRMYG.

This Zea mays (Maize) protein is Transposable element activator uncharacterized 12 kDa protein.